A 90-amino-acid chain; its full sequence is U7-theraphotoxin-Hhn1e (90 aa).

The first 19 residues, 1-19, serve as a signal peptide directing secretion; it reads MKTAIFTVVLALAVFAVLS. A propeptide spanning residues 20 to 50 is cleaved from the precursor; it reads FGWEANEKALSEEFTELIHEKEAASETEARE. Intrachain disulfides connect Cys-51–Cys-65, Cys-58–Cys-70, and Cys-64–Cys-81.

This sequence belongs to the neurotoxin 10 (Hwtx-1) family. 13 (Hntx-13) subfamily. As to expression, expressed by the venom gland.

It is found in the secreted. Functionally, ion channel inhibitor. In Cyriopagopus hainanus (Chinese bird spider), this protein is U7-theraphotoxin-Hhn1e.